An 856-amino-acid chain; its full sequence is DNA mismatch repair protein MutS (856 aa).

ATP is bound at residue 611-618 (GPNMGGKS).

The protein belongs to the DNA mismatch repair MutS family.

In terms of biological role, this protein is involved in the repair of mismatches in DNA. It is possible that it carries out the mismatch recognition step. This protein has a weak ATPase activity. This Histophilus somni (strain 129Pt) (Haemophilus somnus) protein is DNA mismatch repair protein MutS.